A 291-amino-acid chain; its full sequence is Venom metalloproteinase inhibitor DM43 (291 aa).

2 Ig-like V-type domains span residues 22–79 (TNVT…ILTS) and 114–171 (GLET…PASA). An N-linked (GlcNAc...) asparagine glycan is attached at Asn23. Intrachain disulfides connect Cys28-Cys74 and Cys121-Cys163. N-linked (GlcNAc...) asparagine glycosylation is found at Asn156, Asn160, and Asn175. One can recognise an Ig-like V-type 3 domain in the interval 191–288 (PKANFYILND…DSNVLELDLS (98 aa)). A disulfide bond links Cys213 and Cys265.

As to quaternary structure, homodimer. N-glycosylated. As to expression, blood and milk.

Its function is as follows. Metalloproteinase inhibitor. The polypeptide is Venom metalloproteinase inhibitor DM43 (Didelphis marsupialis (Southern opossum)).